We begin with the raw amino-acid sequence, 206 residues long: Large ribosomal subunit protein bL25 (206 aa).

Residues 168 to 206 (DPEESVVTVEVPEDASESTAAPEAAAPAADAAAPAADAK) are disordered. Positions 184 to 206 (ESTAAPEAAAPAADAAAPAADAK) are enriched in low complexity.

Belongs to the bacterial ribosomal protein bL25 family. CTC subfamily. Part of the 50S ribosomal subunit; part of the 5S rRNA/L5/L18/L25 subcomplex. Contacts the 5S rRNA. Binds to the 5S rRNA independently of L5 and L18.

Its function is as follows. This is one of the proteins that binds to the 5S RNA in the ribosome where it forms part of the central protuberance. This chain is Large ribosomal subunit protein bL25, found in Bifidobacterium longum (strain DJO10A).